A 227-amino-acid polypeptide reads, in one-letter code: Mitochondrial cardiolipin hydrolase (227 aa).

Over 1–14 the chain is Mitochondrial intermembrane; it reads MDVFKQMSFKELMK. The helical transmembrane segment at 15–33 threads the bilayer; it reads VLGLGTVAFVLGVEWLNWL. Over 34 to 227 the chain is Cytoplasmic; that stretch reads TRRLRDSRGP…LQSKNGQIKK (194 aa). Residues 153–180 form the PLD phosphodiesterase domain; sequence SAVHMHHKFALVDGRKLISGSLNWTLTA. Active-site residues include histidine 158, lysine 160, and aspartate 165.

This sequence belongs to the phospholipase D family. MitoPLD/Zucchini subfamily. Homodimer.

It localises to the mitochondrion outer membrane. It carries out the reaction a cardiolipin + H2O = a 1,2-diacyl-sn-glycero-3-phospho-(1'-sn-glycerol) + a 1,2-diacyl-sn-glycero-3-phosphate + H(+). Functionally, presents phospholipase and nuclease activities, depending on the different physiological conditions. Plays a key role in mitochondrial fusion and fission via its phospholipase activity. In its phospholipase role, it uses the mitochondrial lipid cardiolipin as substrate to generate phosphatidate (PA or 1,2-diacyl-sn-glycero-3-phosphate), a second messenger signaling lipid. Production of PA facilitates Mitofusin-mediated fusion, whereas the cleavage of PA by the Lipin family of phosphatases produces diacylgycerol (DAG) which promotes mitochondrial fission. Regulates mitochondrial shape through facilitating mitochondrial fusion. During spermatogenesis, plays a critical role in PIWI-interacting RNA (piRNA) biogenesis. piRNAs provide essential protection against the activity of mobile genetic elements. piRNA-mediated transposon silencing is thus critical for maintaining genome stability, in particular in germline cells when transposons are mobilized as a consequence of wide-spread genomic demethylation. Has been shown to be a backbone-non-specific, single strand-specific nuclease, cleaving either RNA or DNA substrates with similar affinity. Produces 5' phosphate and 3' hydroxyl termini, suggesting it could directly participate in the processing of primary piRNA transcripts. Has been proposed to act as a cardiolipin hydrolase to generate phosphatidic acid at mitochondrial surface. Although it cannot be excluded that it can act as a phospholipase in some circumstances, this activity could not be confirmed. The polypeptide is Mitochondrial cardiolipin hydrolase (pld6) (Danio rerio (Zebrafish)).